A 413-amino-acid chain; its full sequence is Aminopeptidase 2 (413 aa).

Residues Glu250, Glu316, Glu340, His345, His378, and Asp380 each coordinate a divalent metal cation.

The protein belongs to the peptidase M29 family. In terms of assembly, homodimer. Requires Co(2+) as cofactor. The cofactor is Zn(2+). It depends on Mg(2+) as a cofactor.

In terms of biological role, broad specificity metal-dependent exopeptidase, releasing all N-terminal amino acids. This is Aminopeptidase 2 from Geobacillus stearothermophilus (Bacillus stearothermophilus).